Here is a 302-residue protein sequence, read N- to C-terminus: MSIEEIRKFSNEISSKINFDYDLKKSNWFNIGGQTKVYFRPDNLPDLILFLKKFGEKEKIHILGAGSNTLISDEKFDGVVIKLGKNFSNISILPNDVIIAGSACLDKKLSDFALNNGIGGFEFLACIPGTIGGGLKMNAGCFNKEFKDVLVSIQAIDKNGQVFTIPASKVIFKYRSNDLKEDLIFLSASFKGTKKNKEEIENEVLELKKKKDKAQPTKLKTSGSTFKNPIDQTDKKVWKLIKDSVPLDISFGDAHISNKHCNFFVNKNNASFEDMNKLIEFVKISVEKKTGIVLEKEIKILK.

An FAD-binding PCMH-type domain is found at 31–210; it reads IGGQTKVYFR…ENEVLELKKK (180 aa). The active site involves Arg-175. The Proton donor role is filled by Ser-224. The active site involves Glu-297.

Belongs to the MurB family. FAD is required as a cofactor.

The protein resides in the cytoplasm. It catalyses the reaction UDP-N-acetyl-alpha-D-muramate + NADP(+) = UDP-N-acetyl-3-O-(1-carboxyvinyl)-alpha-D-glucosamine + NADPH + H(+). It functions in the pathway cell wall biogenesis; peptidoglycan biosynthesis. Its function is as follows. Cell wall formation. This chain is UDP-N-acetylenolpyruvoylglucosamine reductase, found in Pelagibacter ubique (strain HTCC1062).